Consider the following 140-residue polypeptide: Large ribosomal subunit protein mL43 (140 aa).

This sequence belongs to the mitochondrion-specific ribosomal protein mL43 family. As to quaternary structure, component of the mitochondrial large ribosomal subunit (mt-LSU). Mature yeast 74S mitochondrial ribosomes consist of a small (37S) and a large (54S) subunit. The 37S small subunit contains a 15S ribosomal RNA (15S mt-rRNA) and 34 different proteins. The 54S large subunit contains a 21S rRNA (21S mt-rRNA) and 46 different proteins.

It is found in the mitochondrion. Functionally, component of the mitochondrial ribosome (mitoribosome), a dedicated translation machinery responsible for the synthesis of mitochondrial genome-encoded proteins, including at least some of the essential transmembrane subunits of the mitochondrial respiratory chain. The mitoribosomes are attached to the mitochondrial inner membrane and translation products are cotranslationally integrated into the membrane. Also has an extraribosomal function, being essential for mitochondrial genome integrity. May interact with MHR1 to take part in the mtDNA repair mechanism. The protein is Large ribosomal subunit protein mL43 (MRPL51) of Saccharomyces cerevisiae (strain ATCC 204508 / S288c) (Baker's yeast).